Here is a 565-residue protein sequence, read N- to C-terminus: NAD-dependent malic enzyme (565 aa).

Residue tyrosine 104 is the Proton donor of the active site. Arginine 157 lines the NAD(+) pocket. Lysine 175 functions as the Proton acceptor in the catalytic mechanism. Residues glutamate 246, aspartate 247, and aspartate 270 each coordinate a divalent metal cation. Residues aspartate 270 and asparagine 418 each contribute to the NAD(+) site.

This sequence belongs to the malic enzymes family. As to quaternary structure, homotetramer. It depends on Mg(2+) as a cofactor. Mn(2+) is required as a cofactor.

It catalyses the reaction (S)-malate + NAD(+) = pyruvate + CO2 + NADH. It carries out the reaction oxaloacetate + H(+) = pyruvate + CO2. The polypeptide is NAD-dependent malic enzyme (Proteus mirabilis (strain HI4320)).